We begin with the raw amino-acid sequence, 726 residues long: Catalase-peroxidase (726 aa).

Residues 1-33 (MSTSDDIHNTTATGKCPFHQGGHDQSAGAGTTT) form a disordered region. The tryptophyl-tyrosyl-methioninium (Trp-Tyr) (with M-252) cross-link spans 105 to 226 (WHGAGTYRSI…LGATEMGLIY (122 aa)). Residue H106 is the Proton acceptor of the active site. Residues 226–252 (YVNPEGPDHSGEPLSAAAAIRATFGNM) constitute a cross-link (tryptophyl-tyrosyl-methioninium (Tyr-Met) (with W-105)). H267 contacts heme b.

Belongs to the peroxidase family. Peroxidase/catalase subfamily. Homodimer or homotetramer. Heme b is required as a cofactor. Post-translationally, formation of the three residue Trp-Tyr-Met cross-link is important for the catalase, but not the peroxidase activity of the enzyme.

It carries out the reaction H2O2 + AH2 = A + 2 H2O. The catalysed reaction is 2 H2O2 = O2 + 2 H2O. In terms of biological role, bifunctional enzyme with both catalase and broad-spectrum peroxidase activity. The polypeptide is Catalase-peroxidase (Shigella boydii serotype 18 (strain CDC 3083-94 / BS512)).